The following is a 428-amino-acid chain: Gamma-glutamyl phosphate reductase (428 aa).

It belongs to the gamma-glutamyl phosphate reductase family.

It localises to the cytoplasm. The catalysed reaction is L-glutamate 5-semialdehyde + phosphate + NADP(+) = L-glutamyl 5-phosphate + NADPH + H(+). It participates in amino-acid biosynthesis; L-proline biosynthesis; L-glutamate 5-semialdehyde from L-glutamate: step 2/2. Functionally, catalyzes the NADPH-dependent reduction of L-glutamate 5-phosphate into L-glutamate 5-semialdehyde and phosphate. The product spontaneously undergoes cyclization to form 1-pyrroline-5-carboxylate. This Chromohalobacter salexigens (strain ATCC BAA-138 / DSM 3043 / CIP 106854 / NCIMB 13768 / 1H11) protein is Gamma-glutamyl phosphate reductase.